We begin with the raw amino-acid sequence, 310 residues long: Thioesterase pytI (310 aa).

2 consecutive transmembrane segments (helical) span residues 14–34 and 95–115; these read SLTP…YFAL and LLGG…IFVA. The tract at residues 168 to 195 is disordered; sequence TLSDDASTTTSSDNSRASTDHGADSEVE. Residues 170 to 184 are compositionally biased toward low complexity; that stretch reads SDDASTTTSSDNSRA.

Belongs to the AMT4 thioesterase family.

It localises to the membrane. The protein operates within secondary metabolite biosynthesis. Thioesterase; part of the gene cluster that mediates the biosynthesis of pyranterreones, a family of antioxidative compounds. The first step of pyranonigrins biosynthesis is performed by the hybrid PKS-NRPS synthetase pytA that condenses 4 malonyl-CoA units ato the acetyl starter unit by the modular PKS of pytA. The acyl chain is then connected to an L-serine through the amide bond by the modular NRPS of pytA. A tetramic acid is formed and released from the PKS-NRPS pytA to give pyranterreone 5 with the help of the thioesterase pytI. Pyranterreone 5 could be methylated by pytC to afford pyranterreone 6. Both pyranterreones 5 and 6 are subsequently oxidized by the FAD-linked oxidoreductase pytB and the cytochrome P450 monooxygenase pytD to form the fused gamma-pyrone core, resulting in pyranterreones 7 and 11, respectively. The hydroxy group at C-8 of pyranterreones 7 and 11 are dehydrated by the aspartyl protease pytH to form a delta-7 double bond to give pyranterreones 3 and 1, 2 accordingly. The exo-methylene of pyranterreone 3 could be reduced into a pendant methyl by reductase pytE to provide pyranterreone 4, also known as cordylactam. Pyranterreone 4 can be reconverted to pyranterreone 3 through pytB-catalyzed dehydrogenation or further oxidized to pyranterreones 9 and 10. This chain is Thioesterase pytI, found in Aspergillus terreus.